We begin with the raw amino-acid sequence, 618 residues long: Probable Xaa-Pro aminopeptidase P (618 aa).

Mn(2+) is bound by residues Asp414, Asp425, Glu523, and Glu537.

It belongs to the peptidase M24B family. Requires Mn(2+) as cofactor.

It catalyses the reaction Release of any N-terminal amino acid, including proline, that is linked to proline, even from a dipeptide or tripeptide.. Its function is as follows. Catalyzes the removal of a penultimate prolyl residue from the N-termini of peptides. This chain is Probable Xaa-Pro aminopeptidase P (AMPP), found in Metarhizium robertsii (strain ARSEF 23 / ATCC MYA-3075) (Metarhizium anisopliae (strain ARSEF 23)).